A 789-amino-acid chain; its full sequence is Disintegrin and metalloproteinase domain-containing protein 7 (789 aa).

The signal sequence occupies residues 1–25 (MFPTGIFLMSVLISQMQGRGIVGVE). Positions 26–176 (GQELVHPKKL…NYSCEGLNFT (151 aa)) are excised as a propeptide. N-linked (GlcNAc...) asparagine glycans are attached at residues Asn84, Asn167, and Asn174. At 177 to 668 (KKSTLIDAKI…WGEALNLTSV (492 aa)) the chain is on the extracellular side. Residues 199 to 393 (KFIELFVVAD…QKPACILNNP (195 aa)) enclose the Peptidase M12B domain. 4 cysteine pairs are disulfide-bonded: Cys310-Cys388, Cys350-Cys372, Cys352-Cys357, and Cys459-Cys479. In terms of domain architecture, Disintegrin spans 401 to 487 (YPFCGNKKVD…ECPKDESQAN (87 aa)). 3 N-linked (GlcNAc...) asparagine glycosylation sites follow: Asn583, Asn628, and Asn664. Residues 669 to 689 (SIMVVVLVMVIIGVGLVILLI) form a helical membrane-spanning segment. Residues 690–789 (RYQKCIKMKQ…DSQSDCTRLG (100 aa)) are Cytoplasmic-facing. Over residues 762 to 771 (DPRGIADPKQ) the composition is skewed to basic and acidic residues. The tract at residues 762–789 (DPRGIADPKQNDNMNLNLDSQSDCTRLG) is disordered. The span at 772–789 (NDNMNLNLDSQSDCTRLG) shows a compositional bias: polar residues.

Interacts with ITM2B in sperm; the interaction increases following capacitation. Interacts with HSPA5 and CANX. Expressed specifically in the caput region of the epididymis (at protein level).

Its subcellular location is the membrane. Required for normal male fertility via maintenance of epithelial cell morphology in the caput epididymis and subsequently correct epididymis lumen structure required for sperm development. Plays a role in sperm motility, flagella morphology and tyrosine phosphorylation during sperm capacitance. Plays a role in normal expression levels of HSPA5, ITM2B and ADAM2 in sperm both prior to and post-capacitation. This is a non catalytic metalloprotease-like protein. This chain is Disintegrin and metalloproteinase domain-containing protein 7, found in Rattus norvegicus (Rat).